The following is a 398-amino-acid chain: Lysophosphatidylserine lipase ABHD12 (398 aa).

Positions 1-15 (MRKRTEPVTLEHERC) are enriched in basic and acidic residues. A disordered region spans residues 1 to 24 (MRKRTEPVTLEHERCAASGSSSSG). At 1 to 74 (MRKRTEPVTL…RKSLWFRLRK (74 aa)) the chain is on the cytoplasmic side. Residues 75-95 (ILLCVLGFYIAIPFLVKLCPG) traverse the membrane as a helical segment. Over 96-398 (IQAKLIFLNF…LGKSEPERQH (303 aa)) the chain is Extracellular. N-linked (GlcNAc...) asparagine glycosylation is present at Asn-123. The active-site Nucleophile is the Ser-246. Catalysis depends on charge relay system residues Asp-333 and His-372.

The protein belongs to the serine esterase family.

It is found in the endoplasmic reticulum membrane. It carries out the reaction 1-(9Z-octadecenoyl)-sn-glycero-3-phospho-L-serine + H2O = sn-glycero-3-phospho-L-serine + (9Z)-octadecenoate + H(+). The catalysed reaction is 1-(9Z-octadecenoyl)-sn-glycero-3-phospho-(1'-sn-glycerol) + H2O = sn-glycero-3-phospho-(1'-sn-glycerol) + (9Z)-octadecenoate + H(+). The enzyme catalyses 1-(9Z-octadecenoyl)-sn-glycero-3-phospho-(1D-myo-inositol) + H2O = sn-glycero-3-phospho-1D-myo-inositol + (9Z)-octadecenoate + H(+). It catalyses the reaction 1-(9Z-octadecenoyl)-sn-glycero-3-phosphoethanolamine + H2O = sn-glycero-3-phosphoethanolamine + (9Z)-octadecenoate + H(+). It carries out the reaction 1-(9Z-octadecenoyl)-sn-glycero-3-phosphocholine + H2O = 1-(9Z-octadecenoyl)-sn-glycerol + phosphocholine + H(+). The catalysed reaction is 2-(9Z-octadecenoyl)-glycerol + H2O = glycerol + (9Z)-octadecenoate + H(+). The enzyme catalyses 1-hexadecanoyl-sn-glycero-3-phospho-L-serine + H2O = sn-glycero-3-phospho-L-serine + hexadecanoate + H(+). It catalyses the reaction 2-(5Z,8Z,11Z,14Z-eicosatetraenoyl)-glycerol + H2O = glycerol + (5Z,8Z,11Z,14Z)-eicosatetraenoate + H(+). It carries out the reaction Hydrolyzes glycerol monoesters of long-chain fatty acids.. The catalysed reaction is 1-decanoylglycerol + H2O = decanoate + glycerol + H(+). The enzyme catalyses 1-dodecanoylglycerol + H2O = dodecanoate + glycerol + H(+). It catalyses the reaction 1-tetradecanoylglycerol + H2O = tetradecanoate + glycerol + H(+). It carries out the reaction 2-hexadecanoylglycerol + H2O = glycerol + hexadecanoate + H(+). The catalysed reaction is 1-(9Z-octadecenoyl)-glycerol + H2O = glycerol + (9Z)-octadecenoate + H(+). The enzyme catalyses 2-(9Z,12Z-octadecadienoyl)-glycerol + H2O = (9Z,12Z)-octadecadienoate + glycerol + H(+). It catalyses the reaction 1-(5Z,8Z,11Z,14Z-eicosatetraenoyl)-glycerol + H2O = glycerol + (5Z,8Z,11Z,14Z)-eicosatetraenoate + H(+). It carries out the reaction 1-(9Z,12Z-octadecadienoyl)-glycerol + H2O = (9Z,12Z)-octadecadienoate + glycerol + H(+). The catalysed reaction is 1-hexadecanoylglycerol + H2O = glycerol + hexadecanoate + H(+). The enzyme catalyses 1-octadecanoylglycerol + H2O = octadecanoate + glycerol + H(+). It catalyses the reaction 1-octadecanoyl-2-(9,10-epoxyoctadecanoyl)-sn-glycero-3-phospho-L-serine + H2O = 9,10-epoxyoctadecanoate + 1-octadecanoyl-sn-glycero-3-phosphoserine + H(+). It carries out the reaction 1-octadecanoyl-2-(10-hydroxyoctadecanoyl)-sn-glycero-3-phospho-L-serine + H2O = 1-octadecanoyl-sn-glycero-3-phosphoserine + 10-hydroxyoctadecanoate + H(+). The catalysed reaction is 1-hexadecanoyl-2-(10-hydroxyoctadecanoyl)-sn-glycero-3-phospho-L-serine + H2O = 10-hydroxyoctadecanoate + 1-hexadecanoyl-sn-glycero-3-phospho-L-serine + H(+). Its function is as follows. Lysophosphatidylserine (LPS) lipase that mediates the hydrolysis of lysophosphatidylserine, a class of signaling lipids that regulates immunological and neurological processes. Represents a major lysophosphatidylserine lipase in the brain, thereby playing a key role in the central nervous system. Also able to hydrolyze oxidized phosphatidylserine; oxidized phosphatidylserine is produced in response to severe inflammatory stress and constitutes a proapoptotic 'eat me' signal. Also has monoacylglycerol (MAG) lipase activity: hydrolyzes 2-arachidonoylglycerol (2-AG), thereby acting as a regulator of endocannabinoid signaling pathways. Has a strong preference for very-long-chain lipid substrates; substrate specificity is likely due to improved catalysis and not improved substrate binding. This chain is Lysophosphatidylserine lipase ABHD12, found in Rattus norvegicus (Rat).